Consider the following 453-residue polypeptide: Protein IVY1 (453 aa).

Residues 1–16 (MPDNNTEQLQGSPSSD) are compositionally biased toward polar residues. Residues 1 to 20 (MPDNNTEQLQGSPSSDQRLR) are disordered. Residues S59, S84, and S85 each carry the phosphoserine modification. Coiled coils occupy residues 102-122 (KRDV…SNAY) and 230-257 (IRNL…KHDF). Disordered stretches follow at residues 316-340 (DGPY…EETG) and 353-453 (TSQP…SSNI). Phosphoserine is present on S335. Positions 353–371 (TSQPSTSKTSLPKSKGSST) are enriched in low complexity. Composition is skewed to polar residues over residues 372-384 (VSTP…SSNK) and 404-429 (LMGT…TFKQ). Residues 431–442 (SIKEDNDNHSSD) show a composition bias toward basic and acidic residues. The segment covering 443–453 (TDGMQDQSSNI) has biased composition (polar residues).

In terms of assembly, homomultimer. Interacts with YPT7 and VPS33.

The protein resides in the vacuole membrane. Functionally, may be required for vacuolar fusion. Overexpression leads to fragmentation of vacuoles, missorting of the vacuolar enzyme carboxypeptidase Y (CPY) to the exterior of the cell and accumulation of multivesicular bodies inside the cell. This chain is Protein IVY1 (IVY1), found in Saccharomyces cerevisiae (strain ATCC 204508 / S288c) (Baker's yeast).